A 218-amino-acid polypeptide reads, in one-letter code: Akirin (218 aa).

Positions lysine 96 to alanine 150 are disordered. The span at serine 128 to arginine 147 shows a compositional bias: polar residues.

It belongs to the akirin family. Interacts with hda-1, a component of the NuRD complex. Interacts with let-418, a component of the NuRD and MEC complexes. Interacts with the transcription factor ceh-18. Interacts with ima-2. In terms of tissue distribution, localizes to somatic tissues throughout the body, including muscle cells. Expressed in lateral epithelial seam cells, the hyp7 epidermal syncytium, and multiple head and tail neurons.

Its subcellular location is the nucleus. In terms of biological role, molecular adapter that acts as a bridge between a variety of multiprotein complexes, and which is involved in antifungal innate immunity, development of the muscle and sister chromatid cohesion. Plays a role in antifungal innate immunity by acting as a bridge between components of the NuRD (Nucleosome Remodeling and Deacetylase) and MEC chromatin remodeling complexes. NuRD and MEC complexes bind to the promoters of antimicrobial peptide genes and may recruit other proteins such as ceh-18 to control gene expression in response to fungal infection. During meiotic prophase I, plays a role in the disassembly of synaptonemal complex proteins and in the regulation of chromosome condensation and segregation. Together with nuclear import receptor ima-2, required for the import and load of cohesin complex proteins in meiotic nuclei, possibly by acting as a bridge between ima-2 and cohesins. Required for embryonic development of muscle tissue. This Caenorhabditis elegans protein is Akirin.